Here is a 497-residue protein sequence, read N- to C-terminus: ATP-dependent RNA helicase CshA (497 aa).

The Q motif motif lies at 1–29 (MKFSELGLSDSLLKAIKRSGYEEATPIQE). The 171-residue stretch at 32–202 (IPMVLEGKDV…VQFMSDPETV (171 aa)) folds into the Helicase ATP-binding domain. 45–52 (AQTGTGKT) lines the ATP pocket. The short motif at 150-153 (DEAD) is the DEAD box element. The region spanning 228-373 (DIMTRLIDVQ…PLKPPTAEEA (146 aa)) is the Helicase C-terminal domain. Positions 425–497 (AASEVPVKIT…SFNIRHRKEN (73 aa)) are disordered. Residues 448–458 (RNGNRNNSHGG) show a composition bias toward low complexity. 2 stretches are compositionally biased toward basic residues: residues 459–473 (NHYR…QHGS) and 481–497 (KSHS…RKEN).

The protein belongs to the DEAD box helicase family. CshA subfamily. As to quaternary structure, oligomerizes, may be a member of the RNA degradosome.

The protein resides in the cytoplasm. It is found in the cell membrane. It carries out the reaction ATP + H2O = ADP + phosphate + H(+). DEAD-box RNA helicase possibly involved in RNA degradation. Unwinds dsRNA in both 5'- and 3'-directions, has RNA-dependent ATPase activity. Over-expression leads to cell aggregation. This is ATP-dependent RNA helicase CshA from Limosilactobacillus reuteri (Lactobacillus reuteri).